Consider the following 324-residue polypeptide: Phospho-N-acetylmuramoyl-pentapeptide-transferase (324 aa).

Transmembrane regions (helical) follow at residues 5-25, 50-70, 77-97, 117-137, 147-167, 176-196, 203-223, 227-247, 250-270, and 302-322; these read VILF…PILI, GTPT…TIVM, ISPE…LGFL, LIGQ…YNFA, LSFD…VGGS, LDGL…ILAW, VAIF…FNAH, VFMG…IAIL, LEIL…SVIL, and VVVT…YIEV.

This sequence belongs to the glycosyltransferase 4 family. MraY subfamily. It depends on Mg(2+) as a cofactor.

Its subcellular location is the cell membrane. It catalyses the reaction UDP-N-acetyl-alpha-D-muramoyl-L-alanyl-gamma-D-glutamyl-meso-2,6-diaminopimeloyl-D-alanyl-D-alanine + di-trans,octa-cis-undecaprenyl phosphate = di-trans,octa-cis-undecaprenyl diphospho-N-acetyl-alpha-D-muramoyl-L-alanyl-D-glutamyl-meso-2,6-diaminopimeloyl-D-alanyl-D-alanine + UMP. Its pathway is cell wall biogenesis; peptidoglycan biosynthesis. In terms of biological role, catalyzes the initial step of the lipid cycle reactions in the biosynthesis of the cell wall peptidoglycan: transfers peptidoglycan precursor phospho-MurNAc-pentapeptide from UDP-MurNAc-pentapeptide onto the lipid carrier undecaprenyl phosphate, yielding undecaprenyl-pyrophosphoryl-MurNAc-pentapeptide, known as lipid I. This Bacillus subtilis (strain 168) protein is Phospho-N-acetylmuramoyl-pentapeptide-transferase.